Here is a 382-residue protein sequence, read N- to C-terminus: UDP-4-amino-4-deoxy-L-arabinose--oxoglutarate aminotransferase (382 aa).

Residue lysine 182 is modified to N6-(pyridoxal phosphate)lysine.

Belongs to the DegT/DnrJ/EryC1 family. ArnB subfamily. In terms of assembly, homodimer. It depends on pyridoxal 5'-phosphate as a cofactor.

The enzyme catalyses UDP-4-amino-4-deoxy-beta-L-arabinose + 2-oxoglutarate = UDP-beta-L-threo-pentopyranos-4-ulose + L-glutamate. Its pathway is nucleotide-sugar biosynthesis; UDP-4-deoxy-4-formamido-beta-L-arabinose biosynthesis; UDP-4-deoxy-4-formamido-beta-L-arabinose from UDP-alpha-D-glucuronate: step 2/3. The protein operates within bacterial outer membrane biogenesis; lipopolysaccharide biosynthesis. Functionally, catalyzes the conversion of UDP-4-keto-arabinose (UDP-Ara4O) to UDP-4-amino-4-deoxy-L-arabinose (UDP-L-Ara4N). The modified arabinose is attached to lipid A and is required for resistance to polymyxin and cationic antimicrobial peptides. The protein is UDP-4-amino-4-deoxy-L-arabinose--oxoglutarate aminotransferase of Yersinia enterocolitica serotype O:8 / biotype 1B (strain NCTC 13174 / 8081).